The following is a 203-amino-acid chain: UPF0637 protein MCCL_0722 (203 aa).

The protein belongs to the UPF0637 family.

The protein is UPF0637 protein MCCL_0722 of Macrococcus caseolyticus (strain JCSC5402) (Macrococcoides caseolyticum).